Here is a 547-residue protein sequence, read N- to C-terminus: Probable FMN/FAD exporter YeeO (547 aa).

A run of 11 helical transmembrane segments spans residues 94–114, 139–159, 174–194, 211–231, 246–268, 281–301, 318–338, 350–370, 404–424, 439–459, and 486–506; these read ITPL…MGVL, VIMA…AFSL, SLVI…HFGE, LALT…ITLI, LLIN…YGLF, GLTI…AIGF, FSII…SVLF, AGMG…AALI, VFWL…PFAG, VVVI…ASWV, and VVVG…VWMG.

The protein belongs to the multi antimicrobial extrusion (MATE) (TC 2.A.66.1) family.

It localises to the cell inner membrane. Its function is as follows. A transporter able to export peptides and flavins. When overexpressed allows cells deleted for multiple peptidases (pepA, pepB, pepD and pepN) to grow in the presence of dipeptides Ala-Gln or Gly-Tyr which otherwise inhibit growth. Cells overexpressing this protein have decreased intracellular levels of Ala-Gln dipeptide, and in a system that produces the Ala-Gln dipeptide, overproduction of this protein increases its export. When overexpressed increases secretion of FMN and FAD but not riboflavin; intracellular concentrations of FMN and riboflavin rise, possibly to compensate for increased secretion. Increased overexpression causes slight cell elongation. This chain is Probable FMN/FAD exporter YeeO (yeeO), found in Escherichia coli (strain K12).